Here is a 101-residue protein sequence, read N- to C-terminus: MVERFSDEARNTALNELPGWSQVAGREAITRTFTFRDFNEAFGFMARVALVAEKTDHHPEWRNVYRTVEVVLATHDAGGVTERDIRLAEAMNAIARQCGGI.

Belongs to the pterin-4-alpha-carbinolamine dehydratase family.

It carries out the reaction (4aS,6R)-4a-hydroxy-L-erythro-5,6,7,8-tetrahydrobiopterin = (6R)-L-erythro-6,7-dihydrobiopterin + H2O. This Nitrobacter winogradskyi (strain ATCC 25391 / DSM 10237 / CIP 104748 / NCIMB 11846 / Nb-255) protein is Putative pterin-4-alpha-carbinolamine dehydratase.